A 394-amino-acid polypeptide reads, in one-letter code: Quinolinate synthase (394 aa).

2 residues coordinate iminosuccinate: H57 and S74. C121 contacts [4Fe-4S] cluster. Iminosuccinate is bound by residues 153–155 (YMN) and S174. Position 243 (C243) interacts with [4Fe-4S] cluster. Residues 269-271 (HPE) and T286 contribute to the iminosuccinate site. [4Fe-4S] cluster is bound at residue C333.

Belongs to the quinolinate synthase family. Type 3 subfamily. [4Fe-4S] cluster serves as cofactor.

It is found in the cytoplasm. It carries out the reaction iminosuccinate + dihydroxyacetone phosphate = quinolinate + phosphate + 2 H2O + H(+). The protein operates within cofactor biosynthesis; NAD(+) biosynthesis; quinolinate from iminoaspartate: step 1/1. Its function is as follows. Catalyzes the condensation of iminoaspartate with dihydroxyacetone phosphate to form quinolinate. This Corynebacterium glutamicum (strain ATCC 13032 / DSM 20300 / JCM 1318 / BCRC 11384 / CCUG 27702 / LMG 3730 / NBRC 12168 / NCIMB 10025 / NRRL B-2784 / 534) protein is Quinolinate synthase.